Here is a 147-residue protein sequence, read N- to C-terminus: Urease accessory protein UreE (147 aa).

This sequence belongs to the UreE family.

It localises to the cytoplasm. Functionally, involved in urease metallocenter assembly. Binds nickel. Probably functions as a nickel donor during metallocenter assembly. This is Urease accessory protein UreE from Marinomonas sp. (strain MWYL1).